The chain runs to 327 residues: Small ribosomal subunit protein RACK1 (327 aa).

7 WD repeats span residues 13–44 (AHTD…IVWK), 61–91 (GHSH…RLWD), 103–133 (GHTK…KLWN), 148–180 (GHRD…KVWN), 192–222 (GHTG…LLWD), 233–262 (EANS…KIWD), and 293–323 (RKVI…RVWG).

It belongs to the WD repeat G protein beta family. Ribosomal protein RACK1 subfamily.

The protein is Small ribosomal subunit protein RACK1 (GB1) of Brassica napus (Rape).